The sequence spans 360 residues: Epoxyqueuosine reductase (360 aa).

Asp142 (proton donor) is an active-site residue. Residues 187-216 enclose the 4Fe-4S ferredoxin-type domain; that stretch reads APTEPVTAHCGSCQACMDVCPTQAIVAPHR. Residues Cys196, Cys199, Cys202, Cys206, Cys222, Cys249, Cys252, and Cys256 each contribute to the [4Fe-4S] cluster site.

It belongs to the QueG family. As to quaternary structure, monomer. It depends on cob(II)alamin as a cofactor. The cofactor is [4Fe-4S] cluster.

It is found in the cytoplasm. The enzyme catalyses epoxyqueuosine(34) in tRNA + AH2 = queuosine(34) in tRNA + A + H2O. It participates in tRNA modification; tRNA-queuosine biosynthesis. Functionally, catalyzes the conversion of epoxyqueuosine (oQ) to queuosine (Q), which is a hypermodified base found in the wobble positions of tRNA(Asp), tRNA(Asn), tRNA(His) and tRNA(Tyr). The protein is Epoxyqueuosine reductase of Alicycliphilus denitrificans (strain DSM 14773 / CIP 107495 / K601).